The primary structure comprises 341 residues: Methionine import ATP-binding protein MetN 2 (341 aa).

The ABC transporter domain maps to 2 to 241; it reads IELKEVVKEY…PQHAVTKRFV (240 aa). ATP is bound at residue 38-45; it reads GFSGAGKS.

Belongs to the ABC transporter superfamily. Methionine importer (TC 3.A.1.24) family. In terms of assembly, the complex is composed of two ATP-binding proteins (MetN), two transmembrane proteins (MetI) and a solute-binding protein (MetQ).

Its subcellular location is the cell membrane. The catalysed reaction is L-methionine(out) + ATP + H2O = L-methionine(in) + ADP + phosphate + H(+). The enzyme catalyses D-methionine(out) + ATP + H2O = D-methionine(in) + ADP + phosphate + H(+). In terms of biological role, part of the ABC transporter complex MetNIQ involved in methionine import. Responsible for energy coupling to the transport system. The sequence is that of Methionine import ATP-binding protein MetN 2 from Staphylococcus aureus (strain MRSA252).